We begin with the raw amino-acid sequence, 349 residues long: UDP-N-acetylenolpyruvoylglucosamine reductase (349 aa).

In terms of domain architecture, FAD-binding PCMH-type spans 25 to 197 (GIAARARFAA…VAVTFRLPKQ (173 aa)). Arg-173 is an active-site residue. Ser-249 functions as the Proton donor in the catalytic mechanism. Glu-345 is an active-site residue.

The protein belongs to the MurB family. It depends on FAD as a cofactor.

Its subcellular location is the cytoplasm. The enzyme catalyses UDP-N-acetyl-alpha-D-muramate + NADP(+) = UDP-N-acetyl-3-O-(1-carboxyvinyl)-alpha-D-glucosamine + NADPH + H(+). Its pathway is cell wall biogenesis; peptidoglycan biosynthesis. In terms of biological role, cell wall formation. This Burkholderia orbicola (strain MC0-3) protein is UDP-N-acetylenolpyruvoylglucosamine reductase.